The following is a 280-amino-acid chain: Phosphonoacetaldehyde hydrolase (280 aa).

The active-site Nucleophile is aspartate 20. Residues aspartate 20 and alanine 22 each contribute to the Mg(2+) site. The active-site Schiff-base intermediate with substrate is lysine 61. A Mg(2+)-binding site is contributed by aspartate 194.

The protein belongs to the HAD-like hydrolase superfamily. PhnX family. Homodimer. Mg(2+) serves as cofactor.

It catalyses the reaction phosphonoacetaldehyde + H2O = acetaldehyde + phosphate + H(+). Its function is as follows. Involved in phosphonate degradation. This Nitratidesulfovibrio vulgaris (strain DSM 19637 / Miyazaki F) (Desulfovibrio vulgaris) protein is Phosphonoacetaldehyde hydrolase.